Here is a 319-residue protein sequence, read N- to C-terminus: Glucokinase (319 aa).

ATP is bound at residue 8 to 13 (GDIGGT).

The protein belongs to the bacterial glucokinase family.

It localises to the cytoplasm. The enzyme catalyses D-glucose + ATP = D-glucose 6-phosphate + ADP + H(+). The polypeptide is Glucokinase (Chromohalobacter salexigens (strain ATCC BAA-138 / DSM 3043 / CIP 106854 / NCIMB 13768 / 1H11)).